We begin with the raw amino-acid sequence, 941 residues long: Endoplasmic reticulum aminopeptidase 1 (941 aa).

A topological domain (cytoplasmic) is located at residue methionine 1. A helical; Signal-anchor for type II membrane protein membrane pass occupies residues 2-21; sequence VFLPLKWSLATMSFLLSSLL. Over 22–941 the chain is Lumenal; sequence ALLTVSTPSW…WLQSEKLERM (920 aa). N-linked (GlcNAc...) asparagine glycosylation is found at asparagine 70 and asparagine 154. Substrate-binding positions include glutamate 183 and 317 to 321; that span reads GAMEN. A Zn(2+)-binding site is contributed by histidine 353. Glutamate 354 acts as the Proton acceptor in catalysis. Residues histidine 357 and glutamate 376 each coordinate Zn(2+). 2 disulfide bridges follow: cysteine 404–cysteine 443 and cysteine 736–cysteine 743. N-linked (GlcNAc...) asparagine glycosylation occurs at asparagine 414. N-linked (GlcNAc...) asparagine glycosylation is found at asparagine 760 and asparagine 901.

The protein belongs to the peptidase M1 family. As to quaternary structure, monomer. May also exist as a heterodimer; with ERAP2. Interacts with RBMX. Zn(2+) is required as a cofactor. In terms of processing, N-glycosylated. As to expression, ubiquitous.

The protein localises to the endoplasmic reticulum membrane. Its function is as follows. Aminopeptidase that plays a central role in peptide trimming, a step required for the generation of most HLA class I-binding peptides. Peptide trimming is essential to customize longer precursor peptides to fit them to the correct length required for presentation on MHC class I molecules. Strongly prefers substrates 9-16 residues long. Rapidly degrades 13-mer to a 9-mer and then stops. Preferentially hydrolyzes the residue Leu and peptides with a hydrophobic C-terminus, while it has weak activity toward peptides with charged C-terminus. May play a role in the inactivation of peptide hormones. May be involved in the regulation of blood pressure through the inactivation of angiotensin II and/or the generation of bradykinin in the kidney. This is Endoplasmic reticulum aminopeptidase 1 (ERAP1) from Homo sapiens (Human).